Consider the following 665-residue polypeptide: RNA-directed RNA polymerase (665 aa).

It catalyses the reaction RNA(n) + a ribonucleoside 5'-triphosphate = RNA(n+1) + diphosphate. RNA-dependent RNA polymerase which replicates the viral genome. The chain is RNA-directed RNA polymerase from Atkinsonella hypoxylon (AhV).